A 287-amino-acid polypeptide reads, in one-letter code: Sulfofructosephosphate aldolase (287 aa).

The active-site Proton donor is the Asp82. Residues His83 and His180 each coordinate Zn(2+). Gly181 lines the dihydroxyacetone phosphate pocket. Zn(2+) is bound at residue His208. Residues 209 to 211 (GGS) and 230 to 233 (NVDT) each bind dihydroxyacetone phosphate.

This sequence belongs to the class II fructose-bisphosphate aldolase family. The cofactor is Zn(2+).

The catalysed reaction is 6-deoxy-6-sulfo-D-fructose 1-phosphate = (2S)-3-sulfolactaldehyde + dihydroxyacetone phosphate. Part of the sulfo-EMP2 pathway, a D-sulfoquinovose degradation pathway that produces sulfolactate (SL). Cleaves 6-deoxy-6-sulfo-D-fructose 1-phosphate (SFP) to form dihydroxyacetone phosphate (DHAP) and 3-sulfolactaldehyde (SLA). The protein is Sulfofructosephosphate aldolase of Alkalicoccus urumqiensis (Bacillus urumqiensis).